The following is a 70-amino-acid chain: ATP synthase subunit c (70 aa).

Transmembrane regions (helical) follow at residues 4–24 (IAAAIAIGLGALGAGIGNGLI) and 45–65 (LMFIGVALVEALPIIAVVIAF).

This sequence belongs to the ATPase C chain family. F-type ATPases have 2 components, F(1) - the catalytic core - and F(0) - the membrane proton channel. F(1) has five subunits: alpha(3), beta(3), gamma(1), delta(1), epsilon(1). F(0) has three main subunits: a(1), b(2) and c(10-14). The alpha and beta chains form an alternating ring which encloses part of the gamma chain. F(1) is attached to F(0) by a central stalk formed by the gamma and epsilon chains, while a peripheral stalk is formed by the delta and b chains.

It is found in the cell membrane. Its function is as follows. F(1)F(0) ATP synthase produces ATP from ADP in the presence of a proton or sodium gradient. F-type ATPases consist of two structural domains, F(1) containing the extramembraneous catalytic core and F(0) containing the membrane proton channel, linked together by a central stalk and a peripheral stalk. During catalysis, ATP synthesis in the catalytic domain of F(1) is coupled via a rotary mechanism of the central stalk subunits to proton translocation. Functionally, key component of the F(0) channel; it plays a direct role in translocation across the membrane. A homomeric c-ring of between 10-14 subunits forms the central stalk rotor element with the F(1) delta and epsilon subunits. The polypeptide is ATP synthase subunit c (Bacillus licheniformis (strain ATCC 14580 / DSM 13 / JCM 2505 / CCUG 7422 / NBRC 12200 / NCIMB 9375 / NCTC 10341 / NRRL NRS-1264 / Gibson 46)).